We begin with the raw amino-acid sequence, 161 residues long: Nucleotide-binding protein RC1_3464 (161 aa).

The protein belongs to the YajQ family.

In terms of biological role, nucleotide-binding protein. The protein is Nucleotide-binding protein RC1_3464 of Rhodospirillum centenum (strain ATCC 51521 / SW).